The primary structure comprises 1371 residues: MSAPDEGRRDPPKPKGKTLGSFFGSLPGFSSARNLVANAHSSARARPAADPTGAPAAEAAQPQAQVAAHPEQTAPWTEKELQPSEKMVSGAKDLVCSKMSRAKDAVSSGVASVVDVAKGVVQGGLDTTRSALTGTKEVVSSGVTGAMDMAKGAVQGGLDTSKAVLTGTKDTVSTGLTGAVNVAKGTVQAGVDTTKTVLTGTKDTVTTGVMGAVNLAKGTVQTGVETSKAVLTGTKDAVSTGLTGAVNVARGSIQTGVDTSKTVLTGTKDTVCSGVTGAMNVAKGTIQTGVDTSKTVLTGTKDTVCSGVTGAMNVAKGTIQTGVDTSKTVLTGTKDTVCSGVTGAMNVAKGTIQTGVDTTKTVLTGTKNTVCSGVTGAVNLAKEAIQGGLDTTKSMVMGTKDTMSTGLTGAANVAKGAMQTGLNTTQNIATGTKDTVCSGVTGAMNLARGTIQTGVDTTKIVLTGTKDTVCSGVTGAANVAKGAVQGGLDTTKSVLTGTKDAVSTGLTGAVNVAKGTVQTGVDTTKTVLTGTKDTVCSGVTSAVNVAKGAVQGGLDTTKSVVIGTKDTMSTGLTGAANVAKGAVQTGVDTAKTVLTGTKDTVTTGLVGAVNVAKGTVQTGMDTTKTVLTGTKDTIYSGVTSAVNVAKGAVQTGLKTTQNIATGTKNTFGSGVTSAVNVAKGAAQTGVDTAKTVLTGTKDTVTTGLMGAVNVAKGTVQTSVDTTKTVLTGTKDTVCSGVTGAANVAKGAIQGGLDTTKSVLTGTKDAVSTGLTGAVKLAKGTVQTGMDTTKTVLTGTKDAVCSGVTGAANVAKGAVQMGVDTAKTVLTGTKDTVCSGVTGAANVAKGAVQTGLKTTQNIATGTKNTLGSGVTGAAKVAKGAVQGGLDTTKSVLTGTKDAVSTGLTGAVNLAKGTVQTGVDTSKTVLTGTKDTVCSGVTGAVNVAKGTVQTGVDTAKTVLSGAKDAVTTGVTGAVNVAKGTVQTGVDASKAVLMGTKDTVFSGVTGAMSMAKGAVQGGLDTTKTVLTGTKDAVSAGLMGSGNVATGATHTGLSTFQNWLPSTPATSWGGLTSSRTTDNGGEQTALSPQEAPFSGISTPPDVLSVGPEPAWEAAATTKGLATDVATFTQGAAPGREDTGLLATTHGPEEAPRLAMLQNELEGLGDIFHPMNAEEQAQLAASQPGPKVLSAEQGSYFVRLGDLGPSFRQRAFEHAVSHLQHGQFQARDTLAQLQDCFRLIEKAQQAPEGQPRLDQGSGASAEDAAVQEERDAGVLSRVCGLLRQLHTAYSGLVSSLQGLPAELQQPVGRARHSLCELYGIVASAGSVEELPAERLVQSREGVHQAWQGLEQLLEGLQHNPPLSWLVGPFALPAGGQ.

The segment covering 1–13 has biased composition (basic and acidic residues); the sequence is MSAPDEGRRDPPK. The disordered stretch occupies residues 1-22; the sequence is MSAPDEGRRDPPKPKGKTLGSF. Residues Ser-25 and Ser-31 each carry the phosphoserine modification. The segment at 37-86 is disordered; the sequence is ANAHSSARARPAADPTGAPAAEAAQPQAQVAAHPEQTAPWTEKELQPSEK. The span at 44-72 shows a compositional bias: low complexity; the sequence is RARPAADPTGAPAAEAAQPQAQVAAHPEQ. Repeat copies occupy residues 109–141, 142–174, 175–207, 208–240, 241–273, 274–306, 307–339, 340–372, 373–405, 406–438, 439–471, 472–504, 505–537, 538–570, 571–603, 604–636, 637–669, 670–702, 703–735, 736–768, 769–801, 802–834, 835–867, 868–900, 901–933, 934–966, and 967–999. A 27 X 33 AA approximate tandem repeat region spans residues 109–999; the sequence is GVASVVDVAK…LMGTKDTVFS (891 aa). The span at 1060-1083 shows a compositional bias: polar residues; that stretch reads PATSWGGLTSSRTTDNGGEQTALS. Disordered stretches follow at residues 1060 to 1093 and 1240 to 1260; these read PATS…SGIS and QAPE…EDAA.

It belongs to the perilipin family.

It localises to the cell membrane. The protein localises to the cytoplasm. The protein resides in the lipid droplet. May play a role in triacylglycerol packaging into adipocytes. May function as a coat protein involved in the biogenesis of lipid droplets. This chain is Perilipin-4, found in Homo sapiens (Human).